The chain runs to 805 residues: Nitrite reductase [NAD(P)H] (805 aa).

43-79 (YNRILLSKVLQGDTDIKDITLNDWDWYEENNIQLYTN) is a binding site for FAD. Residue 193–223 (LQNELEKQGMTFLLEKQTEEIVGDDRVEGLR) coordinates NADP(+). [2Fe-2S] cluster contacts are provided by C418, C420, C453, and C456. Residues C635, C641, C675, and C679 each contribute to the [4Fe-4S] cluster site. C679 is a siroheme binding site.

It belongs to the nitrite and sulfite reductase 4Fe-4S domain family. Homodimer. The cofactor is siroheme. Requires [2Fe-2S] cluster as cofactor. [4Fe-4S] cluster serves as cofactor. It depends on FAD as a cofactor.

The enzyme catalyses NH4(+) + 3 NADP(+) + 2 H2O = nitrite + 3 NADPH + 5 H(+). It carries out the reaction NH4(+) + 3 NAD(+) + 2 H2O = nitrite + 3 NADH + 5 H(+). The protein operates within nitrogen metabolism; nitrate reduction (assimilation). In terms of biological role, required for nitrite assimilation. The protein is Nitrite reductase [NAD(P)H] (nasD) of Bacillus subtilis (strain 168).